The chain runs to 681 residues: DNA ligase (681 aa).

NAD(+) is bound by residues 42 to 46, 91 to 92, and Glu120; these read DAEYD and SL. The N6-AMP-lysine intermediate role is filled by Lys122. Residues Arg143, Glu180, Lys302, and Lys326 each contribute to the NAD(+) site. Positions 420, 423, 438, and 444 each coordinate Zn(2+). The 79-residue stretch at 603 to 681 folds into the BRCT domain; that stretch reads ADAQPLLGQT…EAGLIELIGL (79 aa).

It belongs to the NAD-dependent DNA ligase family. LigA subfamily. Mg(2+) serves as cofactor. It depends on Mn(2+) as a cofactor.

It carries out the reaction NAD(+) + (deoxyribonucleotide)n-3'-hydroxyl + 5'-phospho-(deoxyribonucleotide)m = (deoxyribonucleotide)n+m + AMP + beta-nicotinamide D-nucleotide.. DNA ligase that catalyzes the formation of phosphodiester linkages between 5'-phosphoryl and 3'-hydroxyl groups in double-stranded DNA using NAD as a coenzyme and as the energy source for the reaction. It is essential for DNA replication and repair of damaged DNA. The polypeptide is DNA ligase (Shewanella amazonensis (strain ATCC BAA-1098 / SB2B)).